We begin with the raw amino-acid sequence, 289 residues long: Ribonuclease H2 subunit A (289 aa).

In terms of domain architecture, RNase H type-2 spans 20–249 (PFVMGIDEAG…TETAMRGACF (230 aa)). A divalent metal cation is bound by residues Asp-26, Glu-27, and Asp-134.

It belongs to the RNase HII family. Eukaryotic subfamily. The cofactor is Mn(2+). Mg(2+) is required as a cofactor.

It catalyses the reaction Endonucleolytic cleavage to 5'-phosphomonoester.. Functionally, endonuclease that specifically degrades the RNA of RNA-DNA hybrids. Participates in DNA replication. In Dictyostelium discoideum (Social amoeba), this protein is Ribonuclease H2 subunit A (rnaseh2A).